Consider the following 318-residue polypeptide: MNYQVLLYYKYMTIDDPEQFAQDHLAFCKAHHLKGRILVSTEGINGTLSGTKEETEQYMAHMHADERFKDMVFKIDEAEGHAFKKMHVRPRKEIVALDLEDDVDPRHTTGQYLSPVEFRKALEDDDTVIIDARNDYEFDLGHFRGAIRPNITRFRDLPDWIKENKALFADKKVVTYCTGGIRCEKFSGWLLKEGFEDVAQLHGGIATYGKDPETKGEYWDGKMYVFDDRISVDINQVEKTIIGKDWFDGKPCERYINCANPECNKQILVSEENETKYLGACSYECAKHERNRYVQANNISDNEWQQRLTNFDDLHQHA.

A Rhodanese domain is found at 123 to 217 (EDDDTVIIDA…YGKDPETKGE (95 aa)). Cys-177 acts as the Cysteine persulfide intermediate in catalysis.

This sequence belongs to the TrhO family.

It carries out the reaction uridine(34) in tRNA + AH2 + O2 = 5-hydroxyuridine(34) in tRNA + A + H2O. Catalyzes oxygen-dependent 5-hydroxyuridine (ho5U) modification at position 34 in tRNAs. This is tRNA uridine(34) hydroxylase from Staphylococcus aureus (strain USA300).